Here is a 412-residue protein sequence, read N- to C-terminus: Argininosuccinate synthase (412 aa).

Residues Ala-20–Ser-28 and Ala-48 contribute to the ATP site. Tyr-100 and Ser-105 together coordinate L-citrulline. Gly-130 is an ATP binding site. L-aspartate contacts are provided by Thr-132, Asn-136, and Asp-137. Position 136 (Asn-136) interacts with L-citrulline. L-citrulline is bound by residues Arg-140, Ser-189, Ser-198, Glu-274, and Tyr-286.

This sequence belongs to the argininosuccinate synthase family. Type 1 subfamily. As to quaternary structure, homotetramer.

The protein resides in the cytoplasm. The enzyme catalyses L-citrulline + L-aspartate + ATP = 2-(N(omega)-L-arginino)succinate + AMP + diphosphate + H(+). It participates in amino-acid biosynthesis; L-arginine biosynthesis; L-arginine from L-ornithine and carbamoyl phosphate: step 2/3. This is Argininosuccinate synthase from Shewanella halifaxensis (strain HAW-EB4).